We begin with the raw amino-acid sequence, 92 residues long: Long neurotoxin 469 (92 aa).

The signal sequence occupies residues 1–21 (MKTLLLTLVVVTIVCLDLGDS). 5 disulfide bridges follow: Cys-24-Cys-41, Cys-34-Cys-62, Cys-47-Cys-51, Cys-66-Cys-77, and Cys-78-Cys-83.

This sequence belongs to the three-finger toxin family. Long-chain subfamily. Type II alpha-neurotoxin sub-subfamily. In terms of tissue distribution, expressed by the venom gland.

The protein localises to the secreted. Its function is as follows. Binds with high affinity to muscular (alpha-1/CHRNA1) and neuronal (alpha-7/CHRNA7) nicotinic acetylcholine receptor (nAChR) and inhibits acetylcholine from binding to the receptor, thereby impairing neuromuscular and neuronal transmission. The sequence is that of Long neurotoxin 469 from Drysdalia coronoides (White-lipped snake).